Here is a 242-residue protein sequence, read N- to C-terminus: Ubiquinone biosynthesis O-methyltransferase (242 aa).

The S-adenosyl-L-methionine site is built by Arg-44, Gly-64, Asp-85, and Met-129.

This sequence belongs to the methyltransferase superfamily. UbiG/COQ3 family.

The catalysed reaction is a 3-demethylubiquinol + S-adenosyl-L-methionine = a ubiquinol + S-adenosyl-L-homocysteine + H(+). It catalyses the reaction a 3-(all-trans-polyprenyl)benzene-1,2-diol + S-adenosyl-L-methionine = a 2-methoxy-6-(all-trans-polyprenyl)phenol + S-adenosyl-L-homocysteine + H(+). The protein operates within cofactor biosynthesis; ubiquinone biosynthesis. In terms of biological role, O-methyltransferase that catalyzes the 2 O-methylation steps in the ubiquinone biosynthetic pathway. This Yersinia enterocolitica serotype O:8 / biotype 1B (strain NCTC 13174 / 8081) protein is Ubiquinone biosynthesis O-methyltransferase.